A 283-amino-acid chain; its full sequence is (+)-borneol dehydrogenase 2 (283 aa).

NAD(+) is bound by residues 27 to 33, D51, 76 to 77, and 103 to 105; these read GGSSGIG, DV, and NAG. S157 functions as the Proton donor in the catalytic mechanism. NAD(+) contacts are provided by Y170, K174, and T205. Catalysis depends on Y170, which acts as the Proton acceptor. K174 functions as the Proton donor/acceptor in the catalytic mechanism.

It belongs to the short-chain dehydrogenases/reductases (SDR) family.

It carries out the reaction (1R,2S,4R)-borneol + NAD(+) = (1R,4R)-camphor + NADH + H(+). In terms of biological role, involved in the biosynthesis of monoterpene natural products related to camphor. Catalayzes the oxidation of (+)-borneol to (+)-camphor. Shows absolute selectivity towards (+)-borneol. Catalyzes the oxidation of (+)-isoborneol to (-)-camphor. Shows absolute selectivity towards (+)-isoborneol. The protein is (+)-borneol dehydrogenase 2 of Salvia officinalis (Sage).